The sequence spans 186 residues: Ribosome-recycling factor (186 aa).

It belongs to the RRF family.

The protein localises to the cytoplasm. Functionally, responsible for the release of ribosomes from messenger RNA at the termination of protein biosynthesis. May increase the efficiency of translation by recycling ribosomes from one round of translation to another. The sequence is that of Ribosome-recycling factor from Cupriavidus metallidurans (strain ATCC 43123 / DSM 2839 / NBRC 102507 / CH34) (Ralstonia metallidurans).